Here is a 279-residue protein sequence, read N- to C-terminus: Lacto-N-neotetraose biosynthesis glycosyltransferase LgtB (279 aa).

This sequence belongs to the glycosyltransferase 25 family.

The protein operates within glycan metabolism; lacto-N-neotetraose biosynthesis. It functions in the pathway bacterial outer membrane biogenesis; lipooligosaccharide biosynthesis. In terms of biological role, adds the second galactose to the lacto-N-tetraose chain in lipooligosaccharide (LOS). This is Lacto-N-neotetraose biosynthesis glycosyltransferase LgtB (lgtB) from Neisseria meningitidis serogroup A / serotype 4A (strain DSM 15465 / Z2491).